A 219-amino-acid polypeptide reads, in one-letter code: Large ribosomal subunit protein bL31m (219 aa).

Composition is skewed to basic and acidic residues over residues 169-181 (KKEE…KAAE) and 210-219 (KETRHYGKKK). Disordered stretches follow at residues 169 to 188 (KKEE…ADPF) and 200 to 219 (TENM…GKKK).

This sequence belongs to the bacterial ribosomal protein bL31 family. Highly divergent. In terms of assembly, component of the mitochondrial large ribosomal subunit (mt-LSU). Mature N.crassa 74S mitochondrial ribosomes consist of a small (37S) and a large (54S) subunit. The 37S small subunit contains a 16S ribosomal RNA (16S mt-rRNA) and 32 different proteins. The 54S large subunit contains a 23S rRNA (23S mt-rRNA) and 42 different proteins. bL31m bridges the mt-LSU central protuberance and the mt-SSU head.

The protein localises to the mitochondrion. Functionally, component of the mitochondrial ribosome (mitoribosome), a dedicated translation machinery responsible for the synthesis of mitochondrial genome-encoded proteins, including at least some of the essential transmembrane subunits of the mitochondrial respiratory chain. The mitoribosomes are attached to the mitochondrial inner membrane and translation products are cotranslationally integrated into the membrane. In Neurospora crassa (strain ATCC 24698 / 74-OR23-1A / CBS 708.71 / DSM 1257 / FGSC 987), this protein is Large ribosomal subunit protein bL31m (mrpl36).